Reading from the N-terminus, the 127-residue chain is Glycine cleavage system H protein (127 aa).

In terms of domain architecture, Lipoyl-binding spans Thr-24–Lys-105. Residue Lys-65 is modified to N6-lipoyllysine.

Belongs to the GcvH family. In terms of assembly, the glycine cleavage system is composed of four proteins: P, T, L and H. It depends on (R)-lipoate as a cofactor.

Its function is as follows. The glycine cleavage system catalyzes the degradation of glycine. The H protein shuttles the methylamine group of glycine from the P protein to the T protein. The protein is Glycine cleavage system H protein of Pelodictyon phaeoclathratiforme (strain DSM 5477 / BU-1).